Reading from the N-terminus, the 98-residue chain is uncharacterized protein (98 aa).

This is an uncharacterized protein from Rickettsia conorii (strain ATCC VR-613 / Malish 7).